Here is a 158-residue protein sequence, read N- to C-terminus: NAD(P)H-quinone oxidoreductase subunit J, chloroplastic (158 aa).

Belongs to the complex I 30 kDa subunit family. In terms of assembly, NDH is composed of at least 16 different subunits, 5 of which are encoded in the nucleus.

The protein localises to the plastid. Its subcellular location is the chloroplast thylakoid membrane. It catalyses the reaction a plastoquinone + NADH + (n+1) H(+)(in) = a plastoquinol + NAD(+) + n H(+)(out). The enzyme catalyses a plastoquinone + NADPH + (n+1) H(+)(in) = a plastoquinol + NADP(+) + n H(+)(out). Functionally, NDH shuttles electrons from NAD(P)H:plastoquinone, via FMN and iron-sulfur (Fe-S) centers, to quinones in the photosynthetic chain and possibly in a chloroplast respiratory chain. The immediate electron acceptor for the enzyme in this species is believed to be plastoquinone. Couples the redox reaction to proton translocation, and thus conserves the redox energy in a proton gradient. The polypeptide is NAD(P)H-quinone oxidoreductase subunit J, chloroplastic (Arabis hirsuta (Hairy rock-cress)).